The sequence spans 245 residues: Gas vesicle protein F (245 aa).

This sequence belongs to the gas vesicle GvpF/GvpL family. Binds GvpA.

Its subcellular location is the gas vesicle. A minor component of the gas vesicle, may be involved in preventing GvpA aggregation during gas vesicle nucleation. Gas vesicles (GV) are hollow, gas filled proteinaceous nanostructures. During planktonic growth they allow positioning of the organism at a favorable depth for light or nutrient acquisition. This is Gas vesicle protein F from Dolichospermum flosaquae (Anabaena flos-aquae).